Reading from the N-terminus, the 412-residue chain is Lipoyl synthase, mitochondrial (412 aa).

The transit peptide at methionine 1–phenylalanine 28 directs the protein to the mitochondrion. [4Fe-4S] cluster contacts are provided by cysteine 124, cysteine 129, cysteine 135, cysteine 155, cysteine 159, cysteine 162, and serine 372. One can recognise a Radical SAM core domain in the interval glycine 138 to leucine 361.

It belongs to the radical SAM superfamily. Lipoyl synthase family. The cofactor is [4Fe-4S] cluster.

The protein resides in the mitochondrion. It carries out the reaction [[Fe-S] cluster scaffold protein carrying a second [4Fe-4S](2+) cluster] + N(6)-octanoyl-L-lysyl-[protein] + 2 oxidized [2Fe-2S]-[ferredoxin] + 2 S-adenosyl-L-methionine + 4 H(+) = [[Fe-S] cluster scaffold protein] + N(6)-[(R)-dihydrolipoyl]-L-lysyl-[protein] + 4 Fe(3+) + 2 hydrogen sulfide + 2 5'-deoxyadenosine + 2 L-methionine + 2 reduced [2Fe-2S]-[ferredoxin]. It functions in the pathway protein modification; protein lipoylation via endogenous pathway; protein N(6)-(lipoyl)lysine from octanoyl-[acyl-carrier-protein]: step 2/2. Its function is as follows. Catalyzes the radical-mediated insertion of two sulfur atoms into the C-6 and C-8 positions of the octanoyl moiety bound to the lipoyl domains of lipoate-dependent enzymes, thereby converting the octanoylated domains into lipoylated derivatives. This Fusarium vanettenii (strain ATCC MYA-4622 / CBS 123669 / FGSC 9596 / NRRL 45880 / 77-13-4) (Fusarium solani subsp. pisi) protein is Lipoyl synthase, mitochondrial.